Reading from the N-terminus, the 101-residue chain is UPF0751 protein DSY3086 (101 aa).

It belongs to the UPF0751 family.

The polypeptide is UPF0751 protein DSY3086 (Desulfitobacterium hafniense (strain Y51)).